The chain runs to 808 residues: DNA replication licensing factor MCM3 (808 aa).

The residue at position 2 (Ala2) is an N-acetylalanine. Residues Ser160 and Ser275 each carry the phosphoserine modification. Lys293 is modified (N6-acetyllysine). The region spanning 295–502 is the MCM domain; sequence IFDQLARSLA…QDREISDHVL (208 aa). Residues Gln353, Leu393, Glu394, Ala395, and Ala397 each contribute to the ADP site. An Arginine finger motif is present at residues 477 to 480; the sequence is SRFD. Ala523 contacts ATP. Phosphoserine; by ATM is present on Ser535. Lys547 is modified (N6-acetyllysine). Ser611 carries the phosphoserine modification. The tract at residues 662–739 is disordered; it reads KKRKKRSEDE…ETKESQKVEL (78 aa). Residue Arg664 coordinates ATP. A phosphoserine mark is found at Ser668, Ser672, and Ser681. Residues 679–688 show a composition bias toward basic and acidic residues; it reads EKSQEDQEQK. Tyr708 carries the phosphotyrosine modification. Phosphothreonine is present on residues Thr713 and Thr722. A compositionally biased stretch (basic and acidic residues) spans 727–739; it reads DSQETKESQKVEL. Phosphoserine occurs at positions 728 and 734.

The protein belongs to the MCM family. As to quaternary structure, component of the MCM2-7 complex. The complex forms a toroidal hexameric ring with the proposed subunit order MCM2-MCM6-MCM4-MCM7-MCM3-MCM5. Component of the CMG helicase complex, a hexameric ring of related MCM2-7 subunits stabilized by CDC45 and the tetrameric GINS complex. Associated with the replication-specific DNA polymerase alpha. Interacts with MCMBP. Interacts with ANKRD17. Interacts with MCM3AP isoform MCM3AP; this interaction leads to MCM3 acetylation. In terms of processing, acetylated by MCM3AP. O-glycosylated (O-GlcNAcylated), in a cell cycle-dependent manner.

It is found in the nucleus. The protein localises to the chromosome. The enzyme catalyses ATP + H2O = ADP + phosphate + H(+). Acts as a component of the MCM2-7 complex (MCM complex) which is the replicative helicase essential for 'once per cell cycle' DNA replication initiation and elongation in eukaryotic cells. Core component of CDC45-MCM-GINS (CMG) helicase, the molecular machine that unwinds template DNA during replication, and around which the replisome is built. The active ATPase sites in the MCM2-7 ring are formed through the interaction surfaces of two neighboring subunits such that a critical structure of a conserved arginine finger motif is provided in trans relative to the ATP-binding site of the Walker A box of the adjacent subunit. The six ATPase active sites, however, are likely to contribute differentially to the complex helicase activity. Required for the entry in S phase and for cell division. This Bos taurus (Bovine) protein is DNA replication licensing factor MCM3 (MCM3).